A 150-amino-acid chain; its full sequence is Large ribosomal subunit protein bL9 (150 aa).

The protein belongs to the bacterial ribosomal protein bL9 family.

Functionally, binds to the 23S rRNA. The chain is Large ribosomal subunit protein bL9 from Polaromonas sp. (strain JS666 / ATCC BAA-500).